Here is a 445-residue protein sequence, read N- to C-terminus: Phosphoglucosamine mutase (445 aa).

Ser102 (phosphoserine intermediate) is an active-site residue. Mg(2+) contacts are provided by Ser102, Asp241, Asp243, and Asp245. Phosphoserine is present on Ser102.

It belongs to the phosphohexose mutase family. Mg(2+) serves as cofactor. Post-translationally, activated by phosphorylation.

The enzyme catalyses alpha-D-glucosamine 1-phosphate = D-glucosamine 6-phosphate. Catalyzes the conversion of glucosamine-6-phosphate to glucosamine-1-phosphate. The chain is Phosphoglucosamine mutase from Sodalis glossinidius (strain morsitans).